We begin with the raw amino-acid sequence, 466 residues long: ATP synthase subunit beta (466 aa).

148-155 (GGAGVGKT) is an ATP binding site.

It belongs to the ATPase alpha/beta chains family. In terms of assembly, F-type ATPases have 2 components, CF(1) - the catalytic core - and CF(0) - the membrane proton channel. CF(1) has five subunits: alpha(3), beta(3), gamma(1), delta(1), epsilon(1). CF(0) has three main subunits: a(1), b(2) and c(9-12). The alpha and beta chains form an alternating ring which encloses part of the gamma chain. CF(1) is attached to CF(0) by a central stalk formed by the gamma and epsilon chains, while a peripheral stalk is formed by the delta and b chains.

It is found in the cell inner membrane. The enzyme catalyses ATP + H2O + 4 H(+)(in) = ADP + phosphate + 5 H(+)(out). Its function is as follows. Produces ATP from ADP in the presence of a proton gradient across the membrane. The catalytic sites are hosted primarily by the beta subunits. This Xylella fastidiosa (strain 9a5c) protein is ATP synthase subunit beta.